The following is a 1371-amino-acid chain: Soluble scavenger receptor cysteine-rich domain-containing protein SSC5D (1371 aa).

The N-terminal stretch at 1 to 16 is a signal peptide; it reads MRGLACLLAMLVGIQA. The SRCR 1 domain occupies 20–120; it reads LRLADGPHGC…HEEDAGVVCV (101 aa). Intrachain disulfides connect Cys45–Cys109, Cys58–Cys119, and Cys89–Cys99. A compositionally biased stretch (low complexity) spans 143–154; it reads LSGELSPSSEEP. Residues 143-200 are disordered; it reads LSGELSPSSEEPPITHAPQPAASSQNGPRKKNPRPPKQTKSTRAPVLTNGAPHQERLR. 2 SRCR domains span residues 199–299 and 305–405; these read LRLV…LVCT and IRLA…AVCD. Cystine bridges form between Cys224-Cys288, Cys237-Cys298, Cys268-Cys278, Cys330-Cys394, Cys343-Cys404, and Cys374-Cys384. Asn377 and Asn422 each carry an N-linked (GlcNAc...) asparagine glycan. The disordered stretch occupies residues 431–466; that stretch reads TSVGQMPGPAGPWPPSASPTAPPEPGPEAGSPQLRL. Residues 439 to 456 show a composition bias toward pro residues; the sequence is PAGPWPPSASPTAPPEPG. Positions 464 to 565 constitute an SRCR 4 domain; it reads LRLVAGPSRC…HNEDVGVTCT (102 aa). 3 disulfides stabilise this stretch: Cys489-Cys554, Cys502-Cys564, and Cys534-Cys544. The tract at residues 592-756 is disordered; the sequence is WLPGELTTKP…AGVPVPSGPF (165 aa). A compositionally biased stretch (polar residues) spans 599 to 611; the sequence is TKPSASLTSSVPQ. The segment covering 622-633 has biased composition (basic residues); sequence KSTKKWVTKNAR. The span at 653–663 shows a compositional bias: polar residues; sequence TPTSLHPTART. Residues 665 to 676 are compositionally biased toward basic and acidic residues; the sequence is ELPKRLTTEAPH. Over residues 698–740 the composition is skewed to polar residues; that stretch reads PVVSQSTQGPQEVTSEATTTENPQTSLEPSGENTEGSLESSQD. Over residues 741–755 the composition is skewed to low complexity; that stretch reads PATTPTAGVPVPSGP. The region spanning 758-858 is the SRCR 5 domain; sequence VRLADGPNRC…HEEDVVLTCT (101 aa). Intrachain disulfides connect Cys783–Cys847, Cys796–Cys857, and Cys827–Cys837. Disordered stretches follow at residues 888-1270 and 1351-1371; these read RPGH…PFGP and STPV…RGDV. Over residues 894 to 912 the composition is skewed to polar residues; it reads SWATTTNTEVPSPATQNLP. 3 stretches are compositionally biased toward low complexity: residues 936 to 957, 981 to 1004, and 1018 to 1035; these read KGTP…KSPG, PTSA…RQTS, and GTSS…LPSP. Polar residues-rich tracts occupy residues 1039-1086 and 1102-1148; these read ALST…TSEL and SSDS…NPQQ. N-linked (GlcNAc...) asparagine glycosylation is found at Asn1044 and Asn1131. Residues 1149 to 1163 are compositionally biased toward pro residues; sequence PRSPHPATSPQPPTN. Polar residues predominate over residues 1164-1189; the sequence is THPSSTPATPTESLPSSRKTELSSPT. Low complexity predominate over residues 1218 to 1230; the sequence is ASESGPSSPSPAS. Positions 1244–1261 are enriched in polar residues; it reads RSQTLHSASDHLTQGPTP.

As to quaternary structure, interacts with LGALS1 and laminin. Partially N- and O-glycosylated. Detected throughout the gastrointestinal and genitourinary tracts, in serosal salivary gland, the exocrine part of pancreas and testis, as well as in a few tubular structures in kidney. Not detected in lung and heart (at protein level). Strongly expressed in testis, kidney and pancreas, with lower levels detected in bone marrow, spleen, lung, liver, colon, stomach and skeletal muscle. Very low levels or no expression detected in thymus, esophagus, jejunum, ileum, duodenum, ovary, uterus, heart, trachea, brain, cerebellum and bladder.

The protein resides in the secreted. It is found in the cytoplasm. Functionally, binds to extracellular matrix proteins. Binds to pathogen-associated molecular patterns (PAMPs) present on the cell walls of Gram-positive and Gram-negative bacteria and fungi, behaving as a pattern recognition receptor (PRR). Induces bacterial and fungal aggregation and subsequent inhibition of PAMP-induced cytokine release. Does not possess intrinsic bactericidal activity. May play a role in the innate defense and homeostasis of certain epithelial surfaces. The protein is Soluble scavenger receptor cysteine-rich domain-containing protein SSC5D (Ssc5d) of Mus musculus (Mouse).